The primary structure comprises 291 residues: Methionine aminopeptidase (291 aa).

His118 is a binding site for substrate. Residues Asp135, Asp146, and His209 each coordinate a divalent metal cation. Position 216 (His216) interacts with substrate. The a divalent metal cation site is built by Glu241 and Glu273.

Belongs to the peptidase M24A family. Methionine aminopeptidase type 1 subfamily. Monomer. The cofactor is Co(2+). Zn(2+) is required as a cofactor. It depends on Mn(2+) as a cofactor. Requires Fe(2+) as cofactor.

The enzyme catalyses Release of N-terminal amino acids, preferentially methionine, from peptides and arylamides.. Removes the N-terminal methionine from nascent proteins. The N-terminal methionine is often cleaved when the second residue in the primary sequence is small and uncharged (Met-Ala-, Cys, Gly, Pro, Ser, Thr, or Val). Requires deformylation of the N(alpha)-formylated initiator methionine before it can be hydrolyzed. In Chlamydia trachomatis serovar D (strain ATCC VR-885 / DSM 19411 / UW-3/Cx), this protein is Methionine aminopeptidase.